The sequence spans 628 residues: RING finger protein 112 (628 aa).

The segment at 57 to 98 adopts an RING-type zinc-finger fold; that stretch reads CSICLERPREPISLDCGHDFCPRCFSTHRVPGCGPPCCPECR. The tract at residues 132 to 628 is interaction with ZBTB16; sequence AVRAEPLLLV…GDREPLLQEE (497 aa). Positions 167 to 409 constitute a GB1/RHD3-type G domain; that stretch reads DTPVCLLAVL…RCPGYWSEGR (243 aa). 318-319 contacts GTP; that stretch reads RD. Transmembrane regions (helical) follow at residues 544–564 and 577–597; these read LAAVGGAVGAGLMGLAGGVVG and GMVAAGAAVGATGAAVVGGGV.

Belongs to the TRAFAC class dynamin-like GTPase superfamily. GB1/RHD3 GTPase family. GB1 subfamily. As to quaternary structure, self-associates. Interacts with SP1 in an oxidative stress-regulated manner. Interacts with SIGMAR1 in an oxidative stress-regulated manner. Interacts with ZBTB16 (via C2H2-type zinc finger domains 1 and 2). In terms of processing, auto-ubiquitinated.

It localises to the membrane. The protein localises to the cytoplasm. It is found in the nucleus. The protein resides in the nuclear body. Its subcellular location is the nucleoplasm. It localises to the endosome. The protein localises to the cytoplasmic vesicle. It is found in the secretory vesicle. The protein resides in the synaptic vesicle. Its subcellular location is the postsynaptic density. It localises to the perikaryon. The protein localises to the cell projection. It is found in the neuron projection. The enzyme catalyses S-ubiquitinyl-[E2 ubiquitin-conjugating enzyme]-L-cysteine + [acceptor protein]-L-lysine = [E2 ubiquitin-conjugating enzyme]-L-cysteine + N(6)-ubiquitinyl-[acceptor protein]-L-lysine.. It functions in the pathway protein modification; protein ubiquitination. E3 ubiquitin-protein ligase that plays an important role in neuronal differentiation, including neurogenesis and gliogenesis, during brain development. During embryonic development initiates neuronal differentiation by inducing cell cycle arrest at the G0/G1 phase through up-regulation of cell-cycle regulatory proteins. Plays a role not only in the fetal period during the development of the nervous system, but also in the adult brain, where it is involved in the maintenance of neural functions and protection of the nervous tissue cells from oxidative stress-induced damage. Exhibits GTPase and E3 ubiquitin-protein ligase activities. Regulates dendritic spine density and synaptic neurotransmission; its ability to hydrolyze GTP is involved in the maintenance of dendritic spine density. The polypeptide is RING finger protein 112 (RNF112) (Bos taurus (Bovine)).